The following is a 225-amino-acid chain: 3-demethoxyubiquinol 3-hydroxylase (225 aa).

Polar residues predominate over residues 1 to 11; it reads MSVASTSSGFT. The interval 1–20 is disordered; that stretch reads MSVASTSSGFTPFSRRRGPL. Positions 74, 104, 107, 156, 188, and 191 each coordinate Fe cation. A disordered region spans residues 181–203; it reads VSQMKDDEAQHRASAERAGGVPL. The span at 184–195 shows a compositional bias: basic and acidic residues; it reads MKDDEAQHRASA.

It belongs to the COQ7 family. The cofactor is Fe cation.

Its subcellular location is the cell membrane. It catalyses the reaction a 5-methoxy-2-methyl-3-(all-trans-polyprenyl)benzene-1,4-diol + AH2 + O2 = a 3-demethylubiquinol + A + H2O. The protein operates within cofactor biosynthesis; ubiquinone biosynthesis. Its function is as follows. Catalyzes the hydroxylation of 2-nonaprenyl-3-methyl-6-methoxy-1,4-benzoquinol during ubiquinone biosynthesis. This chain is 3-demethoxyubiquinol 3-hydroxylase, found in Bordetella petrii (strain ATCC BAA-461 / DSM 12804 / CCUG 43448).